A 476-amino-acid chain; its full sequence is mRNA-capping enzyme subunit beta (476 aa).

A disordered region spans residues 1-133 (MNVGSILNDE…KLKSTNKPRR (133 aa)). Composition is skewed to basic and acidic residues over residues 51-67 (LKTK…EHSN) and 105-114 (HPIEQDKSEK). A compositionally biased stretch (basic residues) spans 123–132 (SKLKSTNKPR).

Belongs to the fungal TPase family. In terms of assembly, heterodimer. The mRNA-capping enzyme is composed of two separate chains alpha and beta, respectively a mRNA guanylyltransferase and an mRNA 5'-triphosphate monophosphatase. Requires Mg(2+) as cofactor.

Its subcellular location is the nucleus. The enzyme catalyses a 5'-end triphospho-ribonucleoside in mRNA + H2O = a 5'-end diphospho-ribonucleoside in mRNA + phosphate + H(+). Functionally, first step of mRNA capping. Converts the 5'-triphosphate end of a nascent mRNA chain into a diphosphate end. This Debaryomyces hansenii (strain ATCC 36239 / CBS 767 / BCRC 21394 / JCM 1990 / NBRC 0083 / IGC 2968) (Yeast) protein is mRNA-capping enzyme subunit beta (CET1).